Consider the following 353-residue polypeptide: Photosystem II D2 protein (353 aa).

N-acetylthreonine is present on Thr-2. Thr-2 is modified (phosphothreonine). The chain crosses the membrane as a helical span at residues 41–61 (CAYFALGGWFTGTTFVTSWYT). His-118 contributes to the chlorophyll a binding site. The chain crosses the membrane as a helical span at residues 125–141 (GFMLRQFELARSVQLRP). Gln-130 and Asn-143 together coordinate pheophytin a. Residues 153–166 (VFVSVFLIYPLGQS) traverse the membrane as a helical segment. Chlorophyll a is bound at residue His-198. A helical membrane pass occupies residues 208–228 (AALLCAIHGATVENTLFEDGD). His-215 and Phe-262 together coordinate a plastoquinone. His-215 is a Fe cation binding site. His-269 contacts Fe cation. A helical transmembrane segment spans residues 279–295 (GLWMSALGVVGLALNLR).

It belongs to the reaction center PufL/M/PsbA/D family. PSII is composed of 1 copy each of membrane proteins PsbA, PsbB, PsbC, PsbD, PsbE, PsbF, PsbH, PsbI, PsbJ, PsbK, PsbL, PsbM, PsbT, PsbX, PsbY, PsbZ, Psb30/Ycf12, at least 3 peripheral proteins of the oxygen-evolving complex and a large number of cofactors. It forms dimeric complexes. Requires The D1/D2 heterodimer binds P680, chlorophylls that are the primary electron donor of PSII, and subsequent electron acceptors. It shares a non-heme iron and each subunit binds pheophytin, quinone, additional chlorophylls, carotenoids and lipids. There is also a Cl(-1) ion associated with D1 and D2, which is required for oxygen evolution. The PSII complex binds additional chlorophylls, carotenoids and specific lipids. as cofactor.

It localises to the plastid. Its subcellular location is the chloroplast thylakoid membrane. The catalysed reaction is 2 a plastoquinone + 4 hnu + 2 H2O = 2 a plastoquinol + O2. In terms of biological role, photosystem II (PSII) is a light-driven water:plastoquinone oxidoreductase that uses light energy to abstract electrons from H(2)O, generating O(2) and a proton gradient subsequently used for ATP formation. It consists of a core antenna complex that captures photons, and an electron transfer chain that converts photonic excitation into a charge separation. The D1/D2 (PsbA/PsbD) reaction center heterodimer binds P680, the primary electron donor of PSII as well as several subsequent electron acceptors. D2 is needed for assembly of a stable PSII complex. In Barbarea verna (Land cress), this protein is Photosystem II D2 protein.